Reading from the N-terminus, the 691-residue chain is MARDFPLERVRNIGIAAHIDAGKTTTTERILFYSGVVHKIGEVHDGAAVTDWMDQERERGITITAAAISTSWQDHRINIIDTPGHVDFTIEVERSMRVLDGVIAVFCAVGGVQPQSETVWRQADRYSVPRMVFVNKMDRTGADFLKVNKQIKERLKANAFPIQLPIGAEGDLTGIIDLVSNKAYLYKNDLGTDIEEAPIPDEMKDEALEWRSKLMESVAENDEELIEIFLDKGELTEDQLKKGIREGVLKHGLVPVLCGSAFKNKGVQLVLDAVVDYLPAPVDVKPIQGVLPNGKEDIRPSDDNAPFSALAFKVMSDPYGKLTFVRMYSGVLSKGSYVMNSTKDAKERISRLVILKADEREEVDELRAGDLGAVLGLKNTTTGDTLCTTDDPIVLETLFIPEPVISVAVEPKTKGDMEKLSKALQALSEEDPTFRVSTDQETNQTVIAGMGELHLEILVDRMLREFKVEANIGAPQVSYRETIRSSSRGEGKYARQTGGKGQYGHVVIEMEPAEVGKGFEFVNKIVGGTVPKEYIGPASNGMKETCESGVLAGYPLIDVKVTLVDGSFHDVDSSEMAFKIAGSMAFKDGVKKCNPVLLEPMMKVEVESPDDFLGSVIGDLSSRRGQVEGQSVDDGLSKVQAKVPLAEMFGYATQLRSMTQGRGIFSMEFANYEEVPRNVAEAIISKNQGNS.

The tr-type G domain occupies 8–282 (ERVRNIGIAA…AVVDYLPAPV (275 aa)). Residues 17–24 (AHIDAGKT), 81–85 (DTPGH), and 135–138 (NKMD) contribute to the GTP site.

Belongs to the TRAFAC class translation factor GTPase superfamily. Classic translation factor GTPase family. EF-G/EF-2 subfamily.

The protein localises to the cytoplasm. In terms of biological role, catalyzes the GTP-dependent ribosomal translocation step during translation elongation. During this step, the ribosome changes from the pre-translocational (PRE) to the post-translocational (POST) state as the newly formed A-site-bound peptidyl-tRNA and P-site-bound deacylated tRNA move to the P and E sites, respectively. Catalyzes the coordinated movement of the two tRNA molecules, the mRNA and conformational changes in the ribosome. The sequence is that of Elongation factor G from Prochlorococcus marinus (strain MIT 9515).